A 358-amino-acid chain; its full sequence is Probable cinnamyl alcohol dehydrogenase (358 aa).

Position 48 (Cys-48) interacts with Zn(2+). NADP(+) is bound at residue Ser-50. Positions 70, 71, 101, 104, 107, 115, and 164 each coordinate Zn(2+). Residues Thr-168, 189–194 (GLGGVG), 212–217 (SSSDKK), Thr-252, Gly-276, and 299–301 (SFV) each bind NADP(+).

Belongs to the zinc-containing alcohol dehydrogenase family. In terms of assembly, homodimer. Zn(2+) is required as a cofactor. Most actively expressed in stem, hypocotyl and root tissue.

The enzyme catalyses (E)-cinnamyl alcohol + NADP(+) = (E)-cinnamaldehyde + NADPH + H(+). It carries out the reaction (E)-coniferol + NADP(+) = (E)-coniferaldehyde + NADPH + H(+). It catalyses the reaction (E)-sinapyl alcohol + NADP(+) = (E)-sinapaldehyde + NADPH + H(+). The catalysed reaction is (E)-4-coumaroyl alcohol + NADP(+) = (E)-4-coumaraldehyde + NADPH + H(+). The enzyme catalyses (E)-caffeyl alcohol + NADP(+) = (E)-caffeyl aldehyde + NADPH + H(+). The protein operates within aromatic compound metabolism; phenylpropanoid biosynthesis. In terms of biological role, this protein catalyzes the final step in a branch of phenylpropanoid synthesis specific for production of lignin monomers. It acts on coniferyl-, sinapyl-, 4-coumaryl- and cinnamyl-alcohol. This chain is Probable cinnamyl alcohol dehydrogenase (CAD2), found in Medicago sativa (Alfalfa).